The sequence spans 707 residues: Vicilin-like seed storage protein At2g18540 (707 aa).

Residues 1-24 form the signal peptide; it reads MSRFRILPLSIFLCFVSLFFCTES. The region spanning 42 to 185 is the Cupin type-1 1 domain; sequence PLLVKKDQRT…AFAVPEDILR (144 aa). Asn60, Asn203, Asn285, Asn356, Asn396, and Asn399 each carry an N-linked (GlcNAc...) asparagine glycan. Residues 247 to 403 form the Cupin type-1 2 domain; it reads FNVFEEDPDF…SFNLSNETIK (157 aa). A compositionally biased stretch (basic and acidic residues) spans 439 to 696; that stretch reads EEEEIERRRK…KKEEEEEKRR (258 aa). The segment at 439-707 is disordered; sequence EEEEIERRRK…PPQPKPPEEI (269 aa). Over residues 698-707 the composition is skewed to pro residues; the sequence is PPQPKPPEEI.

This sequence belongs to the 7S seed storage protein family.

In terms of biological role, seed storage protein. In Arabidopsis thaliana (Mouse-ear cress), this protein is Vicilin-like seed storage protein At2g18540.